Consider the following 140-residue polypeptide: Ribosome-binding factor A (140 aa).

Belongs to the RbfA family. In terms of assembly, monomer. Binds 30S ribosomal subunits, but not 50S ribosomal subunits or 70S ribosomes.

It is found in the cytoplasm. In terms of biological role, one of several proteins that assist in the late maturation steps of the functional core of the 30S ribosomal subunit. Associates with free 30S ribosomal subunits (but not with 30S subunits that are part of 70S ribosomes or polysomes). Required for efficient processing of 16S rRNA. May interact with the 5'-terminal helix region of 16S rRNA. The protein is Ribosome-binding factor A of Cereibacter sphaeroides (strain ATCC 17025 / ATH 2.4.3) (Rhodobacter sphaeroides).